Consider the following 194-residue polypeptide: MAFRMSEQPRTIKIYNLLAGTNEFIGEGDAYIPPHTGLPANSTDIAPPDIPAGFVAVFNSDEASWHLVEDHRGKTVYDVASGDALFISELGPLPENFTWLSPGGEYQKWNGTAWVKDTEAEKLFRIREAEETKKSLMQVASEHIAPLQDAADLEIATKEETSLLEAWKKYRVLLNRVDTSTAPDIEWPAVPVME.

The protein belongs to the tfa family. As to quaternary structure, homodimer.

Chaperone that acts in assembly of the long tail fibers. The chain is Tail fiber assembly protein (tfa) from Escherichia phage lambda (Bacteriophage lambda).